A 392-amino-acid chain; its full sequence is uncharacterized protein (392 aa).

It belongs to the ROK (NagC/XylR) family.

This is an uncharacterized protein from Sinorhizobium fredii (strain NBRC 101917 / NGR234).